The sequence spans 376 residues: Arf-GAP with dual PH domain-containing protein 2 (376 aa).

Positions 9–130 (KRLLELLQAA…EFMAEKAVSP (122 aa)) constitute an Arf-GAP domain. The C4-type zinc finger occupies 25–48 (CADCGAADPDWASYKLGVFICLHC). PH domains lie at 131-232 (PGDR…AARL) and 254-360 (NYLK…GVLS).

In terms of tissue distribution, expressed in many tissues, with highest levels in fat, heart and skeletal muscle. Also detected in kidney, liver and lung.

The protein resides in the cytoplasm. The protein localises to the cell membrane. In terms of biological role, GTPase-activating protein for the ADP ribosylation factor family (Potential). Binds phosphatidylinositol 4,5-bisphosphate, phosphatidylinositol 3,4,5-trisphosphate (PtdInsP3) and inositol 1,3,4,5-tetrakisphosphate (InsP4). Binding of phosphatidylinositol 3,5-bisphosphate and phosphatidylinositol 3,4-bisphosphate occurs at a much lower affinity. Possesses a stoichiometry of two binding sites for InsP4 with identical affinity. The polypeptide is Arf-GAP with dual PH domain-containing protein 2 (Adap2) (Rattus norvegicus (Rat)).